Consider the following 336-residue polypeptide: Serpentine receptor class gamma-9 (336 aa).

A run of 7 helical transmembrane segments spans residues 30–50, 64–84, 111–131, 152–172, 200–220, 237–257, and 271–291; these read LLQAAYMVPPAFLYARILYVI, FVIYSMDSIVGFILLLLDIFI, IYYPLLNYLHCAQPLIQIFLT, LSFIVAFVSLSPFLIIWNTII, FLFLVRSVAVIITVASTVIMF, LCLACVIHSICFMVPSFFEAL, and FLIQPFAWDVLNVGSPLIMIF.

Belongs to the nematode receptor-like protein srg family.

Its subcellular location is the membrane. The sequence is that of Serpentine receptor class gamma-9 (srg-9) from Caenorhabditis elegans.